We begin with the raw amino-acid sequence, 180 residues long: uncharacterized protein (180 aa).

6 helical membrane passes run 4–24, 25–45, 57–77, 81–101, 124–144, and 156–176; these read KSNIKLILATDLLAVLILSLF, IKNFKMVLAFLLAVFVIWLFI, NLLAMSVGFIEGILIFLGIIY, FLDITLGIFAILILIVMGILF, FLTLISIFGMLLTIYVFLLIL, and IIRTIMLVITANMFIIEFYTF.

It is found in the cell membrane. This is an uncharacterized protein from Methanocaldococcus jannaschii (strain ATCC 43067 / DSM 2661 / JAL-1 / JCM 10045 / NBRC 100440) (Methanococcus jannaschii).